The sequence spans 306 residues: Porphobilinogen deaminase (306 aa).

Cysteine 239 carries the post-translational modification S-(dipyrrolylmethanemethyl)cysteine.

This sequence belongs to the HMBS family. Monomer. Dipyrromethane is required as a cofactor.

The enzyme catalyses 4 porphobilinogen + H2O = hydroxymethylbilane + 4 NH4(+). The protein operates within porphyrin-containing compound metabolism; protoporphyrin-IX biosynthesis; coproporphyrinogen-III from 5-aminolevulinate: step 2/4. Its function is as follows. Tetrapolymerization of the monopyrrole PBG into the hydroxymethylbilane pre-uroporphyrinogen in several discrete steps. The polypeptide is Porphobilinogen deaminase (Helicobacter pylori (strain Shi470)).